Consider the following 418-residue polypeptide: Voltage-gated ClC-type chloride channel ClcB (418 aa).

10 helical membrane passes run 5 to 25, 54 to 74, 146 to 166, 168 to 188, 222 to 242, 258 to 278, 291 to 311, 316 to 336, 352 to 372, and 380 to 400; these read LLIA…FRHA, LLTP…WQKF, LWIA…PLAG, LFIA…PVII, ALII…LTLM, WQLA…PAVW, APPL…AVLA, GAPG…GMLY, LLLG…APIM, and MTGE…ASVI.

Belongs to the chloride channel (TC 2.A.49) family. ClcB subfamily.

The protein resides in the cell inner membrane. In terms of biological role, probably acts as an electrical shunt for an outwardly-directed proton pump that is linked to amino acid decarboxylation, as part of the extreme acid resistance (XAR) response. In Escherichia coli O127:H6 (strain E2348/69 / EPEC), this protein is Voltage-gated ClC-type chloride channel ClcB.